Consider the following 348-residue polypeptide: Noscapine synthase SDR1 (348 aa).

Belongs to the NAD(P)-dependent epimerase/dehydratase family.

It catalyses the reaction narcotine hemiacetal + NAD(+) = noscapine + NADH + H(+). It functions in the pathway alkaloid biosynthesis. Functionally, oxidoreductase that catalyzes the last step in the biosynthesis of the benzylisoquinoline alkaloid noscapine. Converts narcotine hemiacetal to noscapine. The polypeptide is Noscapine synthase SDR1 (Papaver somniferum (Opium poppy)).